A 59-amino-acid polypeptide reads, in one-letter code: Large ribosomal subunit protein bL35 (59 aa).

The segment covering Gly-17–Lys-43 has biased composition (basic residues). Residues Gly-17–Val-47 are disordered.

It belongs to the bacterial ribosomal protein bL35 family.

The polypeptide is Large ribosomal subunit protein bL35 (Mycoplasma genitalium (strain ATCC 33530 / DSM 19775 / NCTC 10195 / G37) (Mycoplasmoides genitalium)).